A 538-amino-acid polypeptide reads, in one-letter code: Cytochrome P450 monooxygenase fogE (538 aa).

The chain crosses the membrane as a helical span at residues 4-24; that stretch reads ASSAILLVALIAALWRLSLIG. C437 contributes to the heme binding site.

The protein belongs to the cytochrome P450 family. Requires heme as cofactor.

It localises to the membrane. It functions in the pathway secondary metabolite biosynthesis. Cytochrome P450 monooxygenase; part of the gene cluster that mediates the biosynthesis of flavoglaucin and congeners (including aspergin, dihydroauroglaucin and auroglaucin), prenylated salicylaldehyde derivatives carrying a saturated or an unsaturated C-7 side chain. The PKS fogA releases the carboxylic acid (8E,10E,12E)-3,5,7-trihydroxytetradeca-8,10,12-trienoic acid as its product, as well as derivatives with one and two double bonds. FogA is indeed able to reduce the initial triketide, thus being at least partially responsible for the differently saturated heptyl side chains of flavoglaucin congeners. The oxidoreductases fogB, fogC and fogD modify the nascent polyketide in fogA-bound form and, together, fogA, fogB, fogC and fogD are necessary for the formation of the aromatic core and the cyclized PKS products are released as salicyl alcohols. In particular, fogB is responsible for oxidation of a hydroxyl group or reduction of remaining double bond(s) at the C-7 residue whereas fogD is probably involved in the reductive release of the modified PKS products. The cytochrome P450 monooxygenase fogE is then responsible for the hydroxylation at C-3 of the benzene ring. The fogE products are substrates of the prenyltransferase fogH and the prenylated benzyl alcohols are subsequently oxidized by the fogF to produce the final aryl aldehydes flavoglaucin and congeners. The short-chain dehydrogenase fogG does not seem to be involved in the biosynthesis of the prenylated salicylaldehyde derivatives. In Aspergillus ruber (strain CBS 135680), this protein is Cytochrome P450 monooxygenase fogE.